We begin with the raw amino-acid sequence, 358 residues long: tRNA-specific 2-thiouridylase MnmA (358 aa).

ATP contacts are provided by residues 6–13 (ALSGGVDS) and Met-32. Catalysis depends on Cys-103, which acts as the Nucleophile. Cys-103 and Cys-201 are disulfide-bonded. An ATP-binding site is contributed by Gly-127. An interaction with tRNA region spans residues 151–153 (KDQ). Cys-201 serves as the catalytic Cysteine persulfide intermediate.

Belongs to the MnmA/TRMU family.

It is found in the cytoplasm. It carries out the reaction S-sulfanyl-L-cysteinyl-[protein] + uridine(34) in tRNA + AH2 + ATP = 2-thiouridine(34) in tRNA + L-cysteinyl-[protein] + A + AMP + diphosphate + H(+). Catalyzes the 2-thiolation of uridine at the wobble position (U34) of tRNA, leading to the formation of s(2)U34. The chain is tRNA-specific 2-thiouridylase MnmA from Thermotoga petrophila (strain ATCC BAA-488 / DSM 13995 / JCM 10881 / RKU-1).